A 134-amino-acid polypeptide reads, in one-letter code: Transcription antitermination protein NusB (134 aa).

This sequence belongs to the NusB family.

Involved in transcription antitermination. Required for transcription of ribosomal RNA (rRNA) genes. Binds specifically to the boxA antiterminator sequence of the ribosomal RNA (rrn) operons. The polypeptide is Transcription antitermination protein NusB (Shewanella sp. (strain W3-18-1)).